Reading from the N-terminus, the 204-residue chain is Phospholipase D (204 aa).

The first 22 residues, methionine 1 to glycine 22, serve as a signal peptide directing secretion. Residues valine 142 to alanine 169 form the PLD phosphodiesterase domain. Active-site residues include histidine 147, lysine 149, and aspartate 154.

Belongs to the phospholipase D family. In terms of assembly, homodimer.

The protein resides in the secreted. It carries out the reaction a 1,2-diacyl-sn-glycero-3-phosphocholine + H2O = a 1,2-diacyl-sn-glycero-3-phosphate + choline + H(+). Functionally, could be a virulence factor. The polypeptide is Phospholipase D (pld) (Rickettsia typhi (strain ATCC VR-144 / Wilmington)).